A 581-amino-acid polypeptide reads, in one-letter code: MADPDSYRSSITSRPAFNRTVTSSTQNYGTPASGNRVLKIVTETHTSSVASGLSPYGQGAASTIRDDREREKKEITELNDRLASYIGKVRFLAAQNRKLEADLNVLQSRFGKSTGSVKIMYEMEITTATNVVKETGKDHEEAEKEIGKIKDQLDELRKKFEEAQKGRAEDRLKIDELLVTLSNLEAEINLLKRRIALLEEEVARLKKENFRLTSELQRVRSELDQETLLRIDNQNKVTTILEEIDFMKRGFETELKDLQAQAARDTTSENREYFKNELMNSIRDIRAEYDRFMAGNRNDLESWSQIRVQEINTQTNRQNAEINHKRDEVKRLHSQVSELKSKHAELAARNGLLEKQLEDLNYQLEDDQRSYEAALNDKDAQVRKLREECQALLVELQMLLDTKQTLDGELKVYRRMLEGNSEENGLRQLVEKVVRTSAINEEVDTETMRVVKGEHSSRTSYQRSAKGNVSIKEVSPEGKFVILENTHRDKEEPLGDWKLKRKIDGKREIVFTFPSDYILHPVQTVKIFARGNGVANPPEVLVFEGDDTFGAGANVQTILYNNSGEERATHMQRQSQQTTTS.

Residues 1 to 33 (MADPDSYRSSITSRPAFNRTVTSSTQNYGTPAS) form a disordered region. The tract at residues 1-74 (MADPDSYRSS…RDDREREKKE (74 aa)) is head. Positions 7-33 (YRSSITSRPAFNRTVTSSTQNYGTPAS) are enriched in polar residues. One can recognise an IF rod domain in the interval 71-424 (EKKEITELND…RMLEGNSEEN (354 aa)). The tract at residues 75 to 106 (ITELNDRLASYIGKVRFLAAQNRKLEADLNVL) is coil 1A. Positions 107-120 (QSRFGKSTGSVKIM) are linker 1. The segment at 121–258 (YEMEITTATN…RGFETELKDL (138 aa)) is coil 1B. Residues 259–276 (QAQAARDTTSENREYFKN) form a linker 12 region. Positions 277–424 (ELMNSIRDIR…RMLEGNSEEN (148 aa)) are coil 2. A tail region spans residues 425–578 (GLRQLVEKVV…THMQRQSQQT (154 aa)). In terms of domain architecture, LTD spans 457 to 574 (SRTSYQRSAK…EERATHMQRQ (118 aa)).

The protein belongs to the intermediate filament family. In terms of assembly, forms some heteromeric filaments with ifb-1. As to expression, expressed in the embryonic and larval hypodermis. Also expressed in the ventral nerve cord of larvae.

It localises to the cytoplasm. In terms of biological role, cytoplasmic intermediate filaments provide mechanical strength to cells. Essential protein, involved in attachment structures in epidermal cells that connect muscles to the external cuticle. Required for epidermal morphogenesis in embryos. Probable component of embryonic epidermal attachment structures. This chain is Intermediate filament protein ifa-3 (ifa-3), found in Caenorhabditis elegans.